Here is a 127-residue protein sequence, read N- to C-terminus: Major sperm protein 2 (127 aa).

Ala2 is subject to N-acetylalanine. The MSP domain maps to 9–126 (DIHTQPGSKI…RRKNLPIEYN (118 aa)).

In terms of tissue distribution, sperm.

The protein resides in the cell projection. It localises to the pseudopodium. The protein localises to the cytoplasm. Its subcellular location is the cytoskeleton. In terms of biological role, central component in molecular interactions underlying sperm crawling. Forms an extensive filament system that extends from sperm villipoda, along the leading edge of the pseudopod. The chain is Major sperm protein 2 from Onchocerca volvulus.